Consider the following 56-residue polypeptide: Small ribosomal subunit protein uS14 (56 aa).

Residues Cys21, Cys24, Cys39, and Cys42 each coordinate Zn(2+).

Belongs to the universal ribosomal protein uS14 family. As to quaternary structure, component of the 40S small ribosomal subunit. The cofactor is Zn(2+).

Its subcellular location is the cytoplasm. The protein resides in the cytosol. It localises to the rough endoplasmic reticulum. This Culex quinquefasciatus (Southern house mosquito) protein is Small ribosomal subunit protein uS14 (RpS29).